A 93-amino-acid chain; its full sequence is Phosphoribosyl-ATP pyrophosphatase (93 aa).

This sequence belongs to the PRA-PH family.

The protein localises to the cytoplasm. It catalyses the reaction 1-(5-phospho-beta-D-ribosyl)-ATP + H2O = 1-(5-phospho-beta-D-ribosyl)-5'-AMP + diphosphate + H(+). Its pathway is amino-acid biosynthesis; L-histidine biosynthesis; L-histidine from 5-phospho-alpha-D-ribose 1-diphosphate: step 2/9. The polypeptide is Phosphoribosyl-ATP pyrophosphatase (hisE) (Mycobacterium bovis (strain ATCC BAA-935 / AF2122/97)).